The following is a 264-amino-acid chain: Phosphatidylserine decarboxylase proenzyme (264 aa).

Residues Asp86, His142, and Ser226 each act as charge relay system; for autoendoproteolytic cleavage activity in the active site. Ser226 acts as the Schiff-base intermediate with substrate; via pyruvic acid; for decarboxylase activity in catalysis. Ser226 carries the pyruvic acid (Ser); by autocatalysis modification.

The protein belongs to the phosphatidylserine decarboxylase family. PSD-B subfamily. Prokaryotic type I sub-subfamily. As to quaternary structure, heterodimer of a large membrane-associated beta subunit and a small pyruvoyl-containing alpha subunit. The cofactor is pyruvate. Post-translationally, is synthesized initially as an inactive proenzyme. Formation of the active enzyme involves a self-maturation process in which the active site pyruvoyl group is generated from an internal serine residue via an autocatalytic post-translational modification. Two non-identical subunits are generated from the proenzyme in this reaction, and the pyruvate is formed at the N-terminus of the alpha chain, which is derived from the carboxyl end of the proenzyme. The autoendoproteolytic cleavage occurs by a canonical serine protease mechanism, in which the side chain hydroxyl group of the serine supplies its oxygen atom to form the C-terminus of the beta chain, while the remainder of the serine residue undergoes an oxidative deamination to produce ammonia and the pyruvoyl prosthetic group on the alpha chain. During this reaction, the Ser that is part of the protease active site of the proenzyme becomes the pyruvoyl prosthetic group, which constitutes an essential element of the active site of the mature decarboxylase.

The protein resides in the cell membrane. It carries out the reaction a 1,2-diacyl-sn-glycero-3-phospho-L-serine + H(+) = a 1,2-diacyl-sn-glycero-3-phosphoethanolamine + CO2. The protein operates within phospholipid metabolism; phosphatidylethanolamine biosynthesis; phosphatidylethanolamine from CDP-diacylglycerol: step 2/2. Catalyzes the formation of phosphatidylethanolamine (PtdEtn) from phosphatidylserine (PtdSer). The chain is Phosphatidylserine decarboxylase proenzyme from Geobacillus kaustophilus (strain HTA426).